Consider the following 896-residue polypeptide: Translation initiation factor IF-2 (896 aa).

2 disordered regions span residues 32–99 (LAQA…TALP) and 117–304 (EITS…KQAE). A compositionally biased stretch (polar residues) spans 35 to 48 (AGSSDTKNSPASKA). Over residues 153 to 169 (TPERIEETPIIRTRTEP) the composition is skewed to basic and acidic residues. Over residues 203-214 (AASTEETTQQQP) the composition is skewed to low complexity. Positions 215-227 (RQNDAASHNNKQQ) are enriched in polar residues. A compositionally biased stretch (low complexity) spans 228–241 (PSGTSSRPASSAPS). Over residues 256-280 (RGSERDRSKRSDESVKAFTGRDRYG) the composition is skewed to basic and acidic residues. A tr-type G domain is found at 401-570 (IRSPIVAFMG…ALQAEVLELK (170 aa)). The segment at 410–417 (GHVDHGKT) is G1. Residue 410–417 (GHVDHGKT) participates in GTP binding. Residues 435-439 (AITQH) form a G2 region. A G3 region spans residues 456–459 (DTPG). GTP contacts are provided by residues 456-460 (DTPGH) and 510-513 (NKCD). The G4 stretch occupies residues 510 to 513 (NKCD). Positions 546–548 (SAK) are G5.

The protein belongs to the TRAFAC class translation factor GTPase superfamily. Classic translation factor GTPase family. IF-2 subfamily.

It localises to the cytoplasm. Functionally, one of the essential components for the initiation of protein synthesis. Protects formylmethionyl-tRNA from spontaneous hydrolysis and promotes its binding to the 30S ribosomal subunits. Also involved in the hydrolysis of GTP during the formation of the 70S ribosomal complex. This is Translation initiation factor IF-2 from Chlamydia trachomatis serovar L2 (strain ATCC VR-902B / DSM 19102 / 434/Bu).